A 506-amino-acid polypeptide reads, in one-letter code: MKKILFMDTTLRDGEQSPGVNLNEQEKLQIARQLERLGIHVMEAGFAAASEGDFQSVKRIANTIQNATVMSLARAKESDIRRAYEAVKGAVSPRLHVFLATSDIHMKYKLCMSKEDVLDSIYRSVTLGKSLFPTVQFSAEDATRTSRDFLAEAVEVAIRAGANVINIPDTVGYTNPEEYYSLFKYLQESVPSYEKAIFSCHCHDDLGMAVANSLAAVEGGALQVEGTINGIGERAGNAALEEVAVALHIRKDFYKAEPSMTLKEIKATSTLVSRLTGMVVPKNKAIVGANAFAHESGIHQDGVLKEVTTYEIIEPALVGESQNLFVLGKHSGRHAFTEKMKELGYEFTNDERDAVFEAFKKLADRKKEITEEDLRALMLGEAAFAAQQYNITQLQVHFVSNSTQCATVVLKDEEGNVFEDAATGSGSIEAIYNAIQRILGLECELADYRIQSITQGQDALAHVHVELKEGAHQVSGFGVAQDVLEASARAYVHAAGKLKSFIQLVK.

The Pyruvate carboxyltransferase domain maps to 4 to 266; the sequence is ILFMDTTLRD…EPSMTLKEIK (263 aa). Residues aspartate 13, histidine 201, histidine 203, and asparagine 237 each contribute to the Mn(2+) site. Positions 390–506 are regulatory domain; sequence NITQLQVHFV…KLKSFIQLVK (117 aa).

The protein belongs to the alpha-IPM synthase/homocitrate synthase family. LeuA type 1 subfamily. Homodimer. The cofactor is Mn(2+).

Its subcellular location is the cytoplasm. The enzyme catalyses 3-methyl-2-oxobutanoate + acetyl-CoA + H2O = (2S)-2-isopropylmalate + CoA + H(+). It functions in the pathway amino-acid biosynthesis; L-leucine biosynthesis; L-leucine from 3-methyl-2-oxobutanoate: step 1/4. Functionally, catalyzes the condensation of the acetyl group of acetyl-CoA with 3-methyl-2-oxobutanoate (2-ketoisovalerate) to form 3-carboxy-3-hydroxy-4-methylpentanoate (2-isopropylmalate). The sequence is that of 2-isopropylmalate synthase from Bacillus thuringiensis (strain Al Hakam).